The primary structure comprises 98 residues: Small ribosomal subunit protein bS18c (98 aa).

A compositionally biased stretch (basic and acidic residues) spans 1–13 (MSKQSFDFKRYKP). Positions 1 to 26 (MSKQSFDFKRYKPEAPSGSRKRPLKK) are disordered.

It belongs to the bacterial ribosomal protein bS18 family. As to quaternary structure, part of the 30S ribosomal subunit.

It localises to the plastid. The protein resides in the chloroplast. The sequence is that of Small ribosomal subunit protein bS18c from Gnetum parvifolium (Small-leaved jointfir).